Reading from the N-terminus, the 386-residue chain is Hydrazine synthase subunit beta (386 aa).

Positions 1-34 (MVIRRKMNKMIRKGMIGAVMLGAAVAISGGVATA) are cleaved as a signal peptide.

In terms of assembly, part of the hydrazine synthase complex that forms an elongated dimer of heterotrimers composed of one alpha, one beta and one gamma subunit.

The protein localises to the anammoxosome. Its pathway is nitrogen metabolism. Component of the hydrazine synthase complex that catalyzes the condensation of nitric oxide (NO) with ammonium to form hydrazine. The beta subunit may play a role in modulating transport of the hydroxylamine intermediate through a tunnel between the gamma and alpha subunit's active site. Is involved in anaerobic ammonium oxidation (anammox), a biological process in which nitrite is used as the electron acceptor in the conversion of ammonium to dinitrogen gas (N2) and water; this bacterial process has a major role in the Earth's nitrogen cycle and has been estimated to synthesize up to 50% of the dinitrogen gas emitted into our atmosphere from the oceans. This chain is Hydrazine synthase subunit beta, found in Kuenenia stuttgartiensis.